Here is a 103-residue protein sequence, read N- to C-terminus: NADH-quinone oxidoreductase subunit K 2 (103 aa).

The next 3 membrane-spanning stretches (helical) occupy residues 7-27 (LAWYLMLSAFLFICGVIGFMI), 31-51 (IITIFMCIELMLNAVNLTFVA), and 63-83 (IFVFFVMVVAAAESAVGLGII).

It belongs to the complex I subunit 4L family. NDH-1 is composed of 14 different subunits. Subunits NuoA, H, J, K, L, M, N constitute the membrane sector of the complex.

The protein localises to the cell inner membrane. It carries out the reaction a quinone + NADH + 5 H(+)(in) = a quinol + NAD(+) + 4 H(+)(out). Its function is as follows. NDH-1 shuttles electrons from NADH, via FMN and iron-sulfur (Fe-S) centers, to quinones in the respiratory chain. The immediate electron acceptor for the enzyme in this species is believed to be ubiquinone. Couples the redox reaction to proton translocation (for every two electrons transferred, four hydrogen ions are translocated across the cytoplasmic membrane), and thus conserves the redox energy in a proton gradient. The sequence is that of NADH-quinone oxidoreductase subunit K 2 from Koribacter versatilis (strain Ellin345).